The primary structure comprises 404 residues: S-adenosylmethionine synthase (404 aa).

139–144 (GKGSSD) lines the ATP pocket.

Belongs to the AdoMet synthase 2 family. It depends on Mg(2+) as a cofactor.

The enzyme catalyses L-methionine + ATP + H2O = S-adenosyl-L-methionine + phosphate + diphosphate. The protein operates within amino-acid biosynthesis; S-adenosyl-L-methionine biosynthesis; S-adenosyl-L-methionine from L-methionine: step 1/1. In terms of biological role, catalyzes the formation of S-adenosylmethionine from methionine and ATP. This is S-adenosylmethionine synthase from Saccharolobus solfataricus (strain ATCC 35092 / DSM 1617 / JCM 11322 / P2) (Sulfolobus solfataricus).